The following is a 76-amino-acid chain: Theta defensin subunit B (76 aa).

An N-terminal signal peptide occupies residues 1-22 (MRTFALLTAMLLLVALQPQAEA). Residues 23 to 64 (RQARADEAAAQQQPGADDQGMAHSFTRPENAALPLSESAKGL) constitute a propeptide that is removed on maturation. The interval 24–54 (QARADEAAAQQQPGADDQGMAHSFTRPENAA) is disordered. Residues 30–44 (AAAQQQPGADDQGMA) are compositionally biased toward low complexity. A Cyclopeptide (Arg-Cys) (interchain with C-73 in subunit A); in form BTD-1 cross-link involves residue Arg65. Residue Arg65 forms a Cyclopeptide (Arg-Cys) (interchain with C-73 in subunit B); in form BTD-2 linkage. A disulfide bridge connects residues Cys68 and Cys73. A Cyclopeptide (Cys-Arg) (interchain with R-65 in subunit A); in form BTD-1 cross-link involves residue Cys73. Cys73 participates in a covalent cross-link: Cyclopeptide (Cys-Arg) (interchain with R-65 in subunit B); in form BTD-2. A propeptide spanning residues 74-76 (QLL) is cleaved from the precursor.

The protein belongs to the alpha-defensin family. Theta subfamily. As to quaternary structure, BTD-1 is a cyclic heterodimer composed of subunits A and B; disulfide-linked. BTD-2 is a cyclic homodimer composed of two subunits B; disulfide-linked. In terms of processing, forms a cyclic peptide with subunit A (BTD-1), or subunit B (BTD-2). An additional intersubunit disulfide bond is formed.

In terms of biological role, BTD-1 and BTD-2 have antimicrobial activity against the Gram-negative bacterium E.coli ML35, the Gram-positive bacterium S.aureus 502a, and the fungus C.albicans 16820. BTD-2 is more effective against E.coli than BTD-1. The chain is Theta defensin subunit B (BTDB) from Papio anubis (Olive baboon).